Consider the following 796-residue polypeptide: Kinesin-like protein KIF3C (796 aa).

The Kinesin motor domain occupies 10 to 367; the sequence is ALKVVARCRP…LRFANRAKNI (358 aa). 97–104 serves as a coordination point for ATP; that stretch reads GQTGTGKT. Disordered stretches follow at residues 252-292, 397-422, and 758-796; these read RQNK…PKEA, EKKG…APAG, and KVRK…VDHD. The segment covering 256–269 has biased composition (low complexity); it reads AGPNAAGGPATQPT. A coiled-coil region spans residues 378 to 632; that stretch reads KDTLLREFQE…NEQTRELKLK (255 aa). The span at 401 to 416 shows a compositional bias: basic residues; sequence MLGKRPRRKSSRRKKA. Residues 633–793 form a globular region; that stretch reads YLIIENFIPP…SVPLHPATVV (161 aa).

This sequence belongs to the TRAFAC class myosin-kinesin ATPase superfamily. Kinesin family. Kinesin II subfamily. As to quaternary structure, heterodimer of KIF3A and KIF3C.

It is found in the cytoplasm. It localises to the cytoskeleton. Microtubule-based anterograde translocator for membranous organelles. The polypeptide is Kinesin-like protein KIF3C (Kif3c) (Mus musculus (Mouse)).